The sequence spans 74 residues: Large ribosomal subunit protein bL31 (74 aa).

4 residues coordinate Zn(2+): Cys-16, Cys-18, Cys-38, and Cys-41.

This sequence belongs to the bacterial ribosomal protein bL31 family. Type A subfamily. Part of the 50S ribosomal subunit. It depends on Zn(2+) as a cofactor.

Functionally, binds the 23S rRNA. The protein is Large ribosomal subunit protein bL31 of Streptomyces griseus subsp. griseus (strain JCM 4626 / CBS 651.72 / NBRC 13350 / KCC S-0626 / ISP 5235).